The following is a 398-amino-acid chain: Organelle RRM domain-containing protein 1, chloroplastic (398 aa).

A chloroplast-targeting transit peptide spans 1 to 88 (MDTALPSVLI…RWVVVMDTPP (88 aa)). Low complexity predominate over residues 54 to 70 (LLASSSESPPAQLAAAS). The interval 54–79 (LLASSSESPPAQLAAASTESQSRSSR) is disordered. The region spanning 299-377 (KRLFVTGLSF…WMIVVDVAKT (79 aa)) is the RRM domain.

The protein resides in the plastid. The protein localises to the chloroplast. Functionally, involved in C-to-U editing of chloroplastic RNA. Functions as major chloroplastic editing factor. Controls a majority of the chloroplastic editing sites. The chain is Organelle RRM domain-containing protein 1, chloroplastic (ORRM1) from Zea mays (Maize).